Here is a 61-residue protein sequence, read N- to C-terminus: Potassium channel toxin alpha-KTx 15.6 (61 aa).

The first 23 residues, 1–23 (MKAFYGMLVIFILCSTCYISVDS), serve as a signal peptide directing secretion. A Pyrrolidone carboxylic acid modification is found at Gln24. 3 disulfide bridges follow: Cys31/Cys52, Cys37/Cys57, and Cys41/Cys59.

This sequence belongs to the short scorpion toxin superfamily. Potassium channel inhibitor family. Alpha-KTx 15 subfamily. In terms of tissue distribution, expressed by the venom gland.

It is found in the secreted. Irreversibly blocks the A-type voltage-gated potassium channels in rat cerebellum granular cells (190 nM induce 50% inhibitory effect) (IC(50)=190 nM). Also weakly inhibits Kv1.2/KCNA2 and Kv1.3/KCNA3. This Tityus discrepans (Venezuelan scorpion) protein is Potassium channel toxin alpha-KTx 15.6.